Reading from the N-terminus, the 402-residue chain is uncharacterized protein (402 aa).

This sequence belongs to the peptidase M20 family.

This is an uncharacterized protein from Sinorhizobium fredii (strain NBRC 101917 / NGR234).